The primary structure comprises 206 residues: Probable GTP-binding protein EngB (206 aa).

The EngB-type G domain occupies 27–201; that stretch reads SGIEVAFAGR…EEKLNQWYSK (175 aa). GTP-binding positions include 35-42, 62-66, 80-83, 147-150, and 180-182; these read GRSNAGKS, GRTQL, DLPG, TKAD, and FSS. 2 residues coordinate Mg(2+): Ser-42 and Thr-64.

The protein belongs to the TRAFAC class TrmE-Era-EngA-EngB-Septin-like GTPase superfamily. EngB GTPase family. The cofactor is Mg(2+).

Its function is as follows. Necessary for normal cell division and for the maintenance of normal septation. In Idiomarina loihiensis (strain ATCC BAA-735 / DSM 15497 / L2-TR), this protein is Probable GTP-binding protein EngB.